The primary structure comprises 453 residues: Adenosylmethionine-8-amino-7-oxononanoate aminotransferase (453 aa).

Glycine 118–serine 119 lines the pyridoxal 5'-phosphate pocket. Residue tyrosine 151 coordinates substrate. Aspartate 258 is a pyridoxal 5'-phosphate binding site. Lysine 287, glycine 322, and arginine 417 together coordinate substrate. N6-(pyridoxal phosphate)lysine is present on lysine 287.

The protein belongs to the class-III pyridoxal-phosphate-dependent aminotransferase family. BioA subfamily. In terms of assembly, homodimer. It depends on pyridoxal 5'-phosphate as a cofactor.

It is found in the cytoplasm. The enzyme catalyses (8S)-8-amino-7-oxononanoate + S-adenosyl-L-methionine = S-adenosyl-4-methylsulfanyl-2-oxobutanoate + (7R,8S)-7,8-diammoniononanoate. The protein operates within cofactor biosynthesis; biotin biosynthesis; 7,8-diaminononanoate from 8-amino-7-oxononanoate (SAM route): step 1/1. Functionally, catalyzes the transfer of the alpha-amino group from S-adenosyl-L-methionine (SAM) to 7-keto-8-aminopelargonic acid (KAPA) to form 7,8-diaminopelargonic acid (DAPA). It is the only aminotransferase known to utilize SAM as an amino donor. The sequence is that of Adenosylmethionine-8-amino-7-oxononanoate aminotransferase from Geobacter sulfurreducens (strain ATCC 51573 / DSM 12127 / PCA).